A 90-amino-acid chain; its full sequence is Leech factor Xa inhibitor (90 aa).

The protein resides in the secreted. Its function is as follows. Potent anticoagulant inhibiting the amidolytic activity of factor Xa (F10) (Ki=4nM) and reducing its ability to activate prothrombin (F2) in the prothrombinase complex (EC(50)=40nM). This Haementeria depressa (Leech) protein is Leech factor Xa inhibitor.